The following is a 567-amino-acid chain: Urease subunit alpha (567 aa).

Positions 129–567 constitute a Urease domain; sequence GGIDAHIHFI…LPMAQRYFLF (439 aa). His134, His136, and Lys217 together coordinate Ni(2+). Lys217 carries the N6-carboxylysine modification. His219 serves as a coordination point for substrate. The Ni(2+) site is built by His246 and His272. The Proton donor role is filled by His320. Asp360 serves as a coordination point for Ni(2+).

It belongs to the metallo-dependent hydrolases superfamily. Urease alpha subunit family. As to quaternary structure, heterotrimer of UreA (gamma), UreB (beta) and UreC (alpha) subunits. Three heterotrimers associate to form the active enzyme. Requires Ni cation as cofactor. Carboxylation allows a single lysine to coordinate two nickel ions.

The protein resides in the cytoplasm. The enzyme catalyses urea + 2 H2O + H(+) = hydrogencarbonate + 2 NH4(+). The protein operates within nitrogen metabolism; urea degradation; CO(2) and NH(3) from urea (urease route): step 1/1. This Teredinibacter turnerae (strain ATCC 39867 / T7901) protein is Urease subunit alpha.